The primary structure comprises 258 residues: 5'-nucleotidase SurE (258 aa).

Residues aspartate 18, aspartate 19, serine 49, and asparagine 102 each contribute to the a divalent metal cation site.

Belongs to the SurE nucleotidase family. The cofactor is a divalent metal cation.

The protein localises to the cytoplasm. It carries out the reaction a ribonucleoside 5'-phosphate + H2O = a ribonucleoside + phosphate. In terms of biological role, nucleotidase that shows phosphatase activity on nucleoside 5'-monophosphates. In Vibrio campbellii (strain ATCC BAA-1116), this protein is 5'-nucleotidase SurE.